A 254-amino-acid chain; its full sequence is Receptor expression-enhancing protein 3 (254 aa).

3 consecutive transmembrane segments (helical) span residues 1–21 (MVSWMISRAVVLVFGMLYPAY), 35–55 (YVRWMMYWIVFALYTVIETVA), and 59–79 (LAWFPLYYELKIAFVIWLLSP). The interval 162–232 (DEPVGHRPYQ…QSMKSVKTIK (71 aa)) is disordered. Residues 198-212 (EQTDEEAEGPFSDDE) are compositionally biased toward acidic residues. Threonine 200 bears the Phosphothreonine mark. Serine 209 bears the Phosphoserine mark.

It belongs to the DP1 family.

Its subcellular location is the endoplasmic reticulum membrane. In terms of biological role, microtubule-binding protein required to ensure proper cell division and nuclear envelope reassembly by sequestering the endoplasmic reticulum away from chromosomes during mitosis. Probably acts by clearing the endoplasmic reticulum membrane from metaphase chromosomes. This is Receptor expression-enhancing protein 3 (Reep3) from Mus musculus (Mouse).